Consider the following 163-residue polypeptide: Photosystem II extrinsic protein V (163 aa).

The signal sequence occupies residues 1–26 (MLKKCVWLAVALCLCLWQFTMGTALA). Heme c is bound by residues His-67 and His-118.

It belongs to the cytochrome c family. PsbV subfamily. PSII is composed of 1 copy each of membrane proteins PsbA, PsbB, PsbC, PsbD, PsbE, PsbF, PsbH, PsbI, PsbJ, PsbK, PsbL, PsbM, PsbT, PsbX, PsbY, PsbZ, Psb30/Ycf12, peripheral proteins PsbO, CyanoQ (PsbQ), PsbU, PsbV and a large number of cofactors. It forms dimeric complexes. Heme c is required as a cofactor.

It is found in the cellular thylakoid membrane. In terms of biological role, one of the extrinsic, lumenal subunits of photosystem II (PSII). PSII is a light-driven water plastoquinone oxidoreductase, using light energy to abstract electrons from H(2)O, generating a proton gradient subsequently used for ATP formation. The extrinsic proteins stabilize the structure of photosystem II oxygen-evolving complex (OEC), the ion environment of oxygen evolution and protect the OEC against heat-induced inactivation. Low-potential cytochrome c that plays a role in the OEC of PSII. The polypeptide is Photosystem II extrinsic protein V (Thermosynechococcus vestitus (strain NIES-2133 / IAM M-273 / BP-1)).